The sequence spans 557 residues: Formate--tetrahydrofolate ligase (557 aa).

An ATP-binding site is contributed by Thr65 to Thr72.

It belongs to the formate--tetrahydrofolate ligase family.

The enzyme catalyses (6S)-5,6,7,8-tetrahydrofolate + formate + ATP = (6R)-10-formyltetrahydrofolate + ADP + phosphate. It participates in one-carbon metabolism; tetrahydrofolate interconversion. The polypeptide is Formate--tetrahydrofolate ligase (Methylococcus capsulatus (strain ATCC 33009 / NCIMB 11132 / Bath)).